Here is a 260-residue protein sequence, read N- to C-terminus: Methylthioribulose-1-phosphate dehydratase (260 aa).

The disordered stretch occupies residues 1-26 (MTPPTTGLPAENTTDDNDHLVQSDDP). The segment covering 16-26 (DNDHLVQSDDP) has biased composition (basic and acidic residues). Cys-109 is a binding site for substrate. Positions 127 and 129 each coordinate Zn(2+). The Proton donor/acceptor role is filled by Glu-154. Position 211 (His-211) interacts with Zn(2+).

Belongs to the aldolase class II family. MtnB subfamily. The cofactor is Zn(2+).

The protein localises to the cytoplasm. The catalysed reaction is 5-(methylsulfanyl)-D-ribulose 1-phosphate = 5-methylsulfanyl-2,3-dioxopentyl phosphate + H2O. It participates in amino-acid biosynthesis; L-methionine biosynthesis via salvage pathway; L-methionine from S-methyl-5-thio-alpha-D-ribose 1-phosphate: step 2/6. Functionally, catalyzes the dehydration of methylthioribulose-1-phosphate (MTRu-1-P) into 2,3-diketo-5-methylthiopentyl-1-phosphate (DK-MTP-1-P). This Podospora anserina (strain S / ATCC MYA-4624 / DSM 980 / FGSC 10383) (Pleurage anserina) protein is Methylthioribulose-1-phosphate dehydratase.